Reading from the N-terminus, the 1379-residue chain is DNA-directed RNA polymerase subunit beta (1379 aa).

This sequence belongs to the RNA polymerase beta chain family. As to quaternary structure, the RNAP catalytic core consists of 2 alpha, 1 beta, 1 beta' and 1 omega subunit. When a sigma factor is associated with the core the holoenzyme is formed, which can initiate transcription.

It carries out the reaction RNA(n) + a ribonucleoside 5'-triphosphate = RNA(n+1) + diphosphate. Its function is as follows. DNA-dependent RNA polymerase catalyzes the transcription of DNA into RNA using the four ribonucleoside triphosphates as substrates. The polypeptide is DNA-directed RNA polymerase subunit beta (Rhizobium leguminosarum bv. trifolii (strain WSM2304)).